A 418-amino-acid chain; its full sequence is NADH-quinone oxidoreductase subunit D (418 aa).

Belongs to the complex I 49 kDa subunit family. NDH-1 is composed of 14 different subunits. Subunits NuoB, C, D, E, F, and G constitute the peripheral sector of the complex.

It is found in the cell inner membrane. It catalyses the reaction a quinone + NADH + 5 H(+)(in) = a quinol + NAD(+) + 4 H(+)(out). Its function is as follows. NDH-1 shuttles electrons from NADH, via FMN and iron-sulfur (Fe-S) centers, to quinones in the respiratory chain. The immediate electron acceptor for the enzyme in this species is believed to be ubiquinone. Couples the redox reaction to proton translocation (for every two electrons transferred, four hydrogen ions are translocated across the cytoplasmic membrane), and thus conserves the redox energy in a proton gradient. The protein is NADH-quinone oxidoreductase subunit D of Bordetella bronchiseptica (strain ATCC BAA-588 / NCTC 13252 / RB50) (Alcaligenes bronchisepticus).